Reading from the N-terminus, the 557-residue chain is Pre-mRNA-processing protein 45 (557 aa).

3 disordered regions span residues 1-32 (MALLSEELSSILPNPDFDDEEEDYVERETSHA), 208-243 (EQDPMEPPKFRHKKVPRGPPSPPPPVLHSPPRKVSA), and 316-444 (MAEK…MSSD). The span at 16–25 (DFDDEEEDYV) shows a compositional bias: acidic residues. A compositionally biased stretch (pro residues) spans 224–235 (RGPPSPPPPVLH). Phosphoserine is present on residues S228 and S236. The segment covering 316-327 (MAEKEKQEKEQR) has biased composition (basic and acidic residues). A Phosphoserine modification is found at S376. The segment covering 386 to 430 (EAFRRRQELRRERRRQAEKDLRLSRMGAEKRAKLAEKDRPRDVAE) has biased composition (basic and acidic residues).

Belongs to the SNW family. As to quaternary structure, homodimer. Interacts with cyp1 and the small 23 kDa subunit of the splicing factor U2AF (u2af23). Belongs to the 40S cdc5-associated complex (or cwf complex), a spliceosome sub-complex reminiscent of a late-stage spliceosome composed of the U2, U5 and U6 snRNAs and at least brr2, cdc5, cwf2/prp3, cwf3/syf1, cwf4/syf3, cwf5/ecm2, spp42/cwf6, cwf7/spf27, cwf8, cwf9, cwf10, cwf11, cwf12, prp45/cwf13, cwf14, cwf15, cwf16, cwf17, cwf18, cwf19, cwf20, cwf21, cwf22, cwf23, cwf24, cwf25, cwf26, cyp7/cwf27, cwf28, cwf29/ist3, lea1, msl1, prp5/cwf1, prp10, prp12/sap130, prp17, prp22, sap61, sap62, sap114, sap145, slu7, smb1, smd1, smd3, smf1, smg1 and syf2.

It is found in the nucleus. In terms of biological role, involved in pre-mRNA splicing. This is Pre-mRNA-processing protein 45 (prp45) from Schizosaccharomyces pombe (strain 972 / ATCC 24843) (Fission yeast).